A 501-amino-acid chain; its full sequence is UPF0616 protein C1687.04 (501 aa).

The protein belongs to the UPF0616 family.

The protein localises to the cytoplasm. It is found in the nucleus. In Schizosaccharomyces pombe (strain 972 / ATCC 24843) (Fission yeast), this protein is UPF0616 protein C1687.04.